The primary structure comprises 672 residues: MLKLAGKEDKKLKTTVFQDETRIFNPPKELVEKSIVMQWMKKKGFKTEKEMRAWCSSDEHYLEFWDEMAKTYVDWHKPYTKVMDDSEMPYFHWFTGGEINITYNAVDRHAKGAKKDKVAYIWIPEPTDQPVQKITYGDLYKEVNKFANGLKSLGLKKGDRVSIYMPMIPQLPIAMLACAKLGVSHIVVFSGFSSKGLMDRAAHCGSRAIITVDGFYRRGKPVPLKPNADEAAGGAPSVEKIIVYKRAGVDVSMKEGRDVWWHDLVKGQSEECEPVWVDPEHRLYILYTSGTTGKPKGIEHATGGNAVGPAQTLHWVFDLKDDDVWWCTADIGWVTGHSYIVYAPLILGMTSLMYEGAADYPDFGRWWKNIQDHKVTVLYTAPTAVRMFMKQGAEWPDKYDLSSLRLLGSVGEPINPEAWMWYREHIGRGELQIMDTWWQTETGTFLNSPLPITPLKPGSCTFPLPGYDISILDEEGNEVPLGSGGNIVALKPYPSMLRAFWGDKERFMKEYWQFYWDVPGRRGVYLAGDKAQRDKDGYFFIQGRIDDVLSVAGHRIANAEVESALVAHPKIAEAAVVGKPDEVKGESIVAFVILRVGNEPSPELAKDAIAFVRKTLGPVAAPTEVHFVNDLPKTRSGKIMRRVVKARALGNPVGDISTLMNPEAVDGIPKIV.

Residues 217–220 (RRGK) and threonine 335 contribute to the CoA site. ATP is bound by residues 411–413 (GEP), 435–440 (DTWWQT), aspartate 529, arginine 544, and arginine 555. Residues valine 566, histidine 568, and isoleucine 571 each coordinate Mg(2+). Arginine 613 contributes to the CoA binding site. Lysine 638 is modified (N6-acetyllysine).

It belongs to the ATP-dependent AMP-binding enzyme family. It depends on Mg(2+) as a cofactor. Post-translationally, acetylated. Deacetylation by the SIR2-homolog deacetylase activates the enzyme. The N-terminus is blocked.

The enzyme catalyses acetate + ATP + CoA = acetyl-CoA + AMP + diphosphate. Catalyzes the conversion of acetate into acetyl-CoA (AcCoA), an essential intermediate at the junction of anabolic and catabolic pathways. AcsA undergoes a two-step reaction. In the first half reaction, AcsA combines acetate with ATP to form acetyl-adenylate (AcAMP) intermediate. In the second half reaction, it can then transfer the acetyl group from AcAMP to the sulfhydryl group of CoA, forming the product AcCoA. The protein is Acetyl-coenzyme A synthetase of Methanothrix soehngenii (Methanosaeta concilii).